The following is a 245-amino-acid chain: 1-(5-phosphoribosyl)-5-[(5-phosphoribosylamino)methylideneamino] imidazole-4-carboxamide isomerase (245 aa).

D7 acts as the Proton acceptor in catalysis. D129 functions as the Proton donor in the catalytic mechanism.

It belongs to the HisA/HisF family.

The protein localises to the cytoplasm. It carries out the reaction 1-(5-phospho-beta-D-ribosyl)-5-[(5-phospho-beta-D-ribosylamino)methylideneamino]imidazole-4-carboxamide = 5-[(5-phospho-1-deoxy-D-ribulos-1-ylimino)methylamino]-1-(5-phospho-beta-D-ribosyl)imidazole-4-carboxamide. It functions in the pathway amino-acid biosynthesis; L-histidine biosynthesis; L-histidine from 5-phospho-alpha-D-ribose 1-diphosphate: step 4/9. In Yersinia pestis bv. Antiqua (strain Antiqua), this protein is 1-(5-phosphoribosyl)-5-[(5-phosphoribosylamino)methylideneamino] imidazole-4-carboxamide isomerase.